A 370-amino-acid polypeptide reads, in one-letter code: D-alanine--D-alanine ligase (370 aa).

The region spanning 144-352 (KKIFADAGIP…YSALIERLVD (209 aa)) is the ATP-grasp domain. ATP is bound at residue 177–232 (EEVLTYPVFVKPANLGSSVGISKATNKKELEDAMTEAFLYDRRVVVEQGVVAREIE). Mg(2+) contacts are provided by aspartate 306, glutamate 319, and asparagine 321.

The protein belongs to the D-alanine--D-alanine ligase family. Mg(2+) serves as cofactor. Requires Mn(2+) as cofactor.

The protein localises to the cytoplasm. It catalyses the reaction 2 D-alanine + ATP = D-alanyl-D-alanine + ADP + phosphate + H(+). It functions in the pathway cell wall biogenesis; peptidoglycan biosynthesis. In terms of biological role, cell wall formation. The polypeptide is D-alanine--D-alanine ligase (Listeria welshimeri serovar 6b (strain ATCC 35897 / DSM 20650 / CCUG 15529 / CIP 8149 / NCTC 11857 / SLCC 5334 / V8)).